Reading from the N-terminus, the 435-residue chain is MRRSRAFIPTAKEAPSDATLPSHKFLVRGGFINQQGAGLYNFLPLGKIVLEKIRAVVKEELDLAGCNEVQLSFVTPIGLWERSGRSEAMGKEMLRINDRHQNEFVLSPTNEEAMVELVKNRVTSYKDLPLNLYQINTKFRDEARPRYGLLRGREFLMKDGYSFHSSTQDMIREFDLMEETYKKIFTRLGLDFRVVAADSGAIGGDGSKEFHVLADSGEDTLIVCQSCNYGANIETIDEFKDKIDELNEKSYEELKELKIDQKCSCGANLHFKKGIEVGHIFQLGTKYSAALEANFSDENGRSKPFEMATFGIGVSRLVAAIIEQNHDESGCIWTKESAPYIVNIMVSNVKDEAQMSLGEDLYAKLRAAKVDVIFDDTKERFGFKMKDAELIGFPYTLIIGKELEGGLVQIFDRKTKESISVESSSAYDKIMELIK.

Belongs to the class-II aminoacyl-tRNA synthetase family. ProS type 2 subfamily. Homodimer.

It is found in the cytoplasm. The enzyme catalyses tRNA(Pro) + L-proline + ATP = L-prolyl-tRNA(Pro) + AMP + diphosphate. Catalyzes the attachment of proline to tRNA(Pro) in a two-step reaction: proline is first activated by ATP to form Pro-AMP and then transferred to the acceptor end of tRNA(Pro). In Sulfurimonas denitrificans (strain ATCC 33889 / DSM 1251) (Thiomicrospira denitrificans (strain ATCC 33889 / DSM 1251)), this protein is Proline--tRNA ligase (proS).